A 144-amino-acid polypeptide reads, in one-letter code: Large ribosomal subunit protein uL15 (144 aa).

Residues 1-53 are disordered; that stretch reads MRLNSLSPAEGAKHSAKRLGRGIGSGLGKTGGRGHKGQKSRTGGGVRRGFEGG. Residues 21–31 show a composition bias toward gly residues; it reads RGIGSGLGKTG.

The protein belongs to the universal ribosomal protein uL15 family. In terms of assembly, part of the 50S ribosomal subunit.

In terms of biological role, binds to the 23S rRNA. This Glaesserella parasuis serovar 5 (strain SH0165) (Haemophilus parasuis) protein is Large ribosomal subunit protein uL15.